Here is a 598-residue protein sequence, read N- to C-terminus: Transcription factor dpl-1 (598 aa).

Disordered regions lie at residues 1–73 (MNPT…PTGL), 435–457 (NRPYSTVPPDRRLSTGATSVNSG), and 573–598 (TEQPMTSAQAAALIQHPQPEEYDYFQ). Polar residues predominate over residues 13-22 (PAQSRPQVSL). Over residues 55-64 (GVGGSSGAGG) the composition is skewed to gly residues.

Belongs to the E2F/DP family. As to quaternary structure, component of the DRM complex, at least composed of lin-9, lin-35, lin-37, lin-52, lin-53, lin-54- dpl-1 and efl-1. Interacts (via N-terminus) with efl-1. Interacts (via C-terminus) with lin-35 (via C-terminus).

The protein localises to the nucleus. Its function is as follows. Synthetic multivulva class B (synMuvB) protein. SynMuvB proteins are required to repress the induction of vulval development by Ras signaling and probably act by forming the multiprotein DRM complex that represses transcription. May also negatively regulate vulval development in association with other SynMuv class B proteins such as lin-15A. Can stimulate E2F-dependent transcription. Plays a role in negatively regulating the progression through the G1 phase of the cell cycle during postembryonic development, most likely by acting as a transcriptional repressor in association with the cell cycle regulatory factor efl-1 and the transcriptional repressor lin-35, but may also act as a positive regulator of cell cycle entry. Involved in the regulation of intestinal cell division during postembryonic development, most likely in complex with efl-1 and lin-35. Promotes germ cell programmed cell death, probably together with efl-1, by positively regulating the expression of the apoptosis proteins ced-3 and ced-4. In particular, positively regulates the expression of ced-4 in response to starvation. Its role in programmed cell death may be in conjunction with cell cycle regulatory factor efl-1 and the synthetic multivulva class B proteins lin-35, lin-37 and lin-52, and is independent of the ced-1, ced-8 and ced-9 pathways. This Caenorhabditis elegans protein is Transcription factor dpl-1.